We begin with the raw amino-acid sequence, 40 residues long: Photosystem II reaction center protein J (40 aa).

A helical transmembrane segment spans residues Ile-8–Phe-28.

The protein belongs to the PsbJ family. In terms of assembly, PSII is composed of 1 copy each of membrane proteins PsbA, PsbB, PsbC, PsbD, PsbE, PsbF, PsbH, PsbI, PsbJ, PsbK, PsbL, PsbM, PsbT, PsbX, PsbY, PsbZ, Psb30/Ycf12, at least 3 peripheral proteins of the oxygen-evolving complex and a large number of cofactors. It forms dimeric complexes.

It localises to the plastid. It is found in the chloroplast thylakoid membrane. One of the components of the core complex of photosystem II (PSII). PSII is a light-driven water:plastoquinone oxidoreductase that uses light energy to abstract electrons from H(2)O, generating O(2) and a proton gradient subsequently used for ATP formation. It consists of a core antenna complex that captures photons, and an electron transfer chain that converts photonic excitation into a charge separation. The polypeptide is Photosystem II reaction center protein J (Hordeum jubatum (Foxtail barley)).